The primary structure comprises 343 residues: tRNA N6-adenosine threonylcarbamoyltransferase (343 aa).

Fe cation contacts are provided by His-120 and His-124. Substrate contacts are provided by residues 142 to 146, Asp-175, Gly-188, Asp-192, and Asn-281; that span reads VVSGG. A Fe cation-binding site is contributed by Asp-310.

This sequence belongs to the KAE1 / TsaD family. Requires Fe(2+) as cofactor.

It is found in the cytoplasm. It carries out the reaction L-threonylcarbamoyladenylate + adenosine(37) in tRNA = N(6)-L-threonylcarbamoyladenosine(37) in tRNA + AMP + H(+). Functionally, required for the formation of a threonylcarbamoyl group on adenosine at position 37 (t(6)A37) in tRNAs that read codons beginning with adenine. Is involved in the transfer of the threonylcarbamoyl moiety of threonylcarbamoyl-AMP (TC-AMP) to the N6 group of A37, together with TsaE and TsaB. TsaD likely plays a direct catalytic role in this reaction. The protein is tRNA N6-adenosine threonylcarbamoyltransferase of Bacillus anthracis.